The following is a 62-amino-acid chain: uncharacterized protein (62 aa).

A disordered region spans residues 17–62 (YNNYNNNNNNNNNNNNNNNNNNNNNNNNNNNNNNNNNNNNNNKNNN).

This is an uncharacterized protein from Dictyostelium discoideum (Social amoeba).